The primary structure comprises 291 residues: 4-hydroxy-tetrahydrodipicolinate synthase (291 aa).

Residue T45 participates in pyruvate binding. Y131 functions as the Proton donor/acceptor in the catalytic mechanism. The Schiff-base intermediate with substrate role is filled by K159. I202 is a pyruvate binding site.

It belongs to the DapA family. Homotetramer; dimer of dimers.

It localises to the cytoplasm. It carries out the reaction L-aspartate 4-semialdehyde + pyruvate = (2S,4S)-4-hydroxy-2,3,4,5-tetrahydrodipicolinate + H2O + H(+). Its pathway is amino-acid biosynthesis; L-lysine biosynthesis via DAP pathway; (S)-tetrahydrodipicolinate from L-aspartate: step 3/4. In terms of biological role, catalyzes the condensation of (S)-aspartate-beta-semialdehyde [(S)-ASA] and pyruvate to 4-hydroxy-tetrahydrodipicolinate (HTPA). In Methanosarcina mazei (strain ATCC BAA-159 / DSM 3647 / Goe1 / Go1 / JCM 11833 / OCM 88) (Methanosarcina frisia), this protein is 4-hydroxy-tetrahydrodipicolinate synthase.